The sequence spans 349 residues: Sensory histidine kinase/phosphatase NtrB (349 aa).

The region spanning 5–78 (IQPDAGQILN…SLAAGQGFTD (74 aa)) is the PAS domain. The Histidine kinase domain maps to 136–349 (GLAHEIKNPL…EFSVYLPIRK (214 aa)). Residue His-139 is modified to Phosphohistidine; by autocatalysis. An ATP-binding site is contributed by Lys-329.

In terms of processing, autophosphorylated.

The protein localises to the cytoplasm. The catalysed reaction is ATP + protein L-histidine = ADP + protein N-phospho-L-histidine.. Member of the two-component regulatory system NtrB/NtrC, which controls expression of the nitrogen-regulated (ntr) genes in response to nitrogen limitation. Under conditions of nitrogen limitation, NtrB autophosphorylates and transfers the phosphoryl group to NtrC. In the presence of nitrogen, acts as a phosphatase that dephosphorylates and inactivates NtrC. This is Sensory histidine kinase/phosphatase NtrB (glnL) from Salmonella typhi.